We begin with the raw amino-acid sequence, 205 residues long: Putative 3-methyladenine DNA glycosylase (205 aa).

The protein belongs to the DNA glycosylase MPG family.

The protein is Putative 3-methyladenine DNA glycosylase of Bacillus cereus (strain B4264).